A 263-amino-acid chain; its full sequence is GTP cyclohydrolase FolE2 (263 aa).

Belongs to the GTP cyclohydrolase IV family.

The enzyme catalyses GTP + H2O = 7,8-dihydroneopterin 3'-triphosphate + formate + H(+). Its pathway is cofactor biosynthesis; 7,8-dihydroneopterin triphosphate biosynthesis; 7,8-dihydroneopterin triphosphate from GTP: step 1/1. Functionally, converts GTP to 7,8-dihydroneopterin triphosphate. In Nitrosospira multiformis (strain ATCC 25196 / NCIMB 11849 / C 71), this protein is GTP cyclohydrolase FolE2.